Reading from the N-terminus, the 721-residue chain is Ophiobolin F synthase oblA (721 aa).

The interval 5-325 (YDQPYSVLLD…RYNLKAEWNE (321 aa)) is (7Z)-ophiobola-7,19-dien-3-ol synthase. 2 residues coordinate Mg(2+): D97 and D101. D97 provides a ligand contact to substrate. A DDXXD 1 motif is present at residues 97-101 (DDVID). Substrate contacts are provided by residues 185–188 (RSLD), N229, 233–237 (SFEKE), and 316–317 (RY). Residues 229–237 (NDLFSFEKE) carry the NSE/DTE motif. The tract at residues 326–721 (LQMLRAKHGV…LRLMMEMLKV (396 aa)) is geranylfarnesyl diphosphate synthase. Residues 348-387 (SMDHIWKKGSTQGESKGEKRKRQSVNGTNGVNGTNGVKKP) are disordered. The segment covering 372–384 (VNGTNGVNGTNGV) has biased composition (low complexity). Residues K432, R435, and H464 each coordinate isopentenyl diphosphate. D471 and D475 together coordinate Mg(2+). A DDXXD 2 motif is present at residues 471-475 (DDLED). R480 is a dimethylallyl diphosphate binding site. R481 provides a ligand contact to isopentenyl diphosphate. Dimethylallyl diphosphate contacts are provided by K558, T559, Q597, N604, K614, and K624.

This sequence in the N-terminal section; belongs to the terpene synthase family. It in the C-terminal section; belongs to the FPP/GGPP synthase family. The cofactor is Mg(2+).

It carries out the reaction isopentenyl diphosphate + (2E,6E)-farnesyl diphosphate = (2E,6E,10E)-geranylgeranyl diphosphate + diphosphate. It catalyses the reaction isopentenyl diphosphate + (2E,6E,10E)-geranylgeranyl diphosphate = (2E,6E,10E,14E)-geranylfarnesyl diphosphate + diphosphate. The catalysed reaction is (2E,6E,10E,14E)-geranylfarnesyl diphosphate + H2O = ophiobolin F + diphosphate. It functions in the pathway secondary metabolite biosynthesis; terpenoid biosynthesis. Bifunctional sesterterpene synthase; part of the gene cluster that mediates the biosynthesis of the sesterterpenes ophiobolins, fungal phytotoxins with potential anti-cancer activities. The first step of the pathway is performed by the sesterterpene synthase oblA that possesses both prenyl transferase and terpene cyclase activity, converting isopentenyl diphosphate and dimethylallyl diphosphate into geranylfarnesyl diphosphate (GFPP) and further converting GFPP into ophiobolin F, respectively. Other sesterterpenoids (C(25) terpenoids) are found as minor products of oblA. The cytochrome P450 monooxygenase oblB then catalyzes a four-step oxidative transformation of ophiobolin F to yield ophiobolin C. The FAD-dependent oxidoreductase oblC might be involved in a later oxidation step that produces ophiobolin A. The chain is Ophiobolin F synthase oblA from Cochliobolus heterostrophus (strain C5 / ATCC 48332 / race O) (Southern corn leaf blight fungus).